The following is a 90-amino-acid chain: Small ribosomal subunit protein uS15 (90 aa).

It belongs to the universal ribosomal protein uS15 family. In terms of assembly, part of the 30S ribosomal subunit. Forms a bridge to the 50S subunit in the 70S ribosome, contacting the 23S rRNA.

Its function is as follows. One of the primary rRNA binding proteins, it binds directly to 16S rRNA where it helps nucleate assembly of the platform of the 30S subunit by binding and bridging several RNA helices of the 16S rRNA. Forms an intersubunit bridge (bridge B4) with the 23S rRNA of the 50S subunit in the ribosome. This Helicobacter pylori (strain J99 / ATCC 700824) (Campylobacter pylori J99) protein is Small ribosomal subunit protein uS15.